A 123-amino-acid chain; its full sequence is Large ribosomal subunit protein uL22 (123 aa).

The protein belongs to the universal ribosomal protein uL22 family. In terms of assembly, part of the 50S ribosomal subunit.

This protein binds specifically to 23S rRNA; its binding is stimulated by other ribosomal proteins, e.g. L4, L17, and L20. It is important during the early stages of 50S assembly. It makes multiple contacts with different domains of the 23S rRNA in the assembled 50S subunit and ribosome. In terms of biological role, the globular domain of the protein is located near the polypeptide exit tunnel on the outside of the subunit, while an extended beta-hairpin is found that lines the wall of the exit tunnel in the center of the 70S ribosome. The protein is Large ribosomal subunit protein uL22 of Synechococcus sp. (strain JA-3-3Ab) (Cyanobacteria bacterium Yellowstone A-Prime).